The sequence spans 633 residues: Extracellular metalloproteinase 3 (633 aa).

A signal peptide spans 1-18 (MHGLLLAGLLALPMNVLA). Positions 19 to 246 (HPAEQHASNV…VHNVVDYVAS (228 aa)) are excised as a propeptide. A glycan (N-linked (GlcNAc...) asparagine) is linked at Asn410. Zn(2+) is bound at residue His429. Glu430 is an active-site residue. A Zn(2+)-binding site is contributed by His433. Asn480 and Asn622 each carry an N-linked (GlcNAc...) asparagine glycan.

The protein belongs to the peptidase M36 family. It depends on Zn(2+) as a cofactor.

It is found in the secreted. In terms of biological role, secreted metalloproteinase probably acting as a virulence factor. The protein is Extracellular metalloproteinase 3 (MEP3) of Trichophyton tonsurans (Scalp ringworm fungus).